Consider the following 182-residue polypeptide: Ribosome-recycling factor (182 aa).

The protein belongs to the RRF family.

It localises to the cytoplasm. In terms of biological role, responsible for the release of ribosomes from messenger RNA at the termination of protein biosynthesis. May increase the efficiency of translation by recycling ribosomes from one round of translation to another. The protein is Ribosome-recycling factor of Nostoc punctiforme (strain ATCC 29133 / PCC 73102).